The primary structure comprises 509 residues: 2-isopropylmalate synthase (509 aa).

Residues 5–267 (IQIFDTTLRD…QTALNLEETK (263 aa)) enclose the Pyruvate carboxyltransferase domain. Residues Asp-14, His-202, His-204, and Asn-238 each contribute to the Mn(2+) site. A regulatory domain region spans residues 391 to 509 (KLETLQLQYV…AAENVEKVGN (119 aa)).

It belongs to the alpha-IPM synthase/homocitrate synthase family. LeuA type 1 subfamily. Homodimer. It depends on Mn(2+) as a cofactor.

The protein localises to the cytoplasm. It catalyses the reaction 3-methyl-2-oxobutanoate + acetyl-CoA + H2O = (2S)-2-isopropylmalate + CoA + H(+). Its pathway is amino-acid biosynthesis; L-leucine biosynthesis; L-leucine from 3-methyl-2-oxobutanoate: step 1/4. In terms of biological role, catalyzes the condensation of the acetyl group of acetyl-CoA with 3-methyl-2-oxobutanoate (2-ketoisovalerate) to form 3-carboxy-3-hydroxy-4-methylpentanoate (2-isopropylmalate). This chain is 2-isopropylmalate synthase, found in Staphylococcus aureus (strain MW2).